The sequence spans 395 residues: Elongation factor Tu (395 aa).

Positions 10–204 (KPHVNVGTIG…AVDAYIDTPL (195 aa)) constitute a tr-type G domain. The tract at residues 19 to 26 (GHVDHGKT) is G1. 19–26 (GHVDHGKT) provides a ligand contact to GTP. T26 contacts Mg(2+). The tract at residues 60–64 (GITIN) is G2. Residues 81 to 84 (DCPG) form a G3 region. GTP is bound by residues 81-85 (DCPGH) and 136-139 (NKAD). Residues 136-139 (NKAD) are G4. Residues 174–176 (SAL) form a G5 region.

It belongs to the TRAFAC class translation factor GTPase superfamily. Classic translation factor GTPase family. EF-Tu/EF-1A subfamily. In terms of assembly, monomer.

The protein resides in the cytoplasm. It catalyses the reaction GTP + H2O = GDP + phosphate + H(+). GTP hydrolase that promotes the GTP-dependent binding of aminoacyl-tRNA to the A-site of ribosomes during protein biosynthesis. The protein is Elongation factor Tu of Acholeplasma laidlawii (strain PG-8A).